The following is a 188-amino-acid chain: Putative manganese efflux pump MntP (188 aa).

Helical transmembrane passes span 3-23, 41-61, 62-82, 107-129, 143-163, and 168-188; these read LSAT…ASIG, LIFG…GMLA, SQFV…FLGG, LLVT…LAFL, ATFL…PLLG, and ILGG…HFAG.

It belongs to the MntP (TC 9.B.29) family.

It is found in the cell inner membrane. In terms of biological role, probably functions as a manganese efflux pump. The chain is Putative manganese efflux pump MntP from Klebsiella pneumoniae (strain 342).